The sequence spans 338 residues: Holliday junction branch migration complex subunit RuvB (338 aa).

Residues Met-1–Ile-22 are disordered. The segment at Ala-4 to Tyr-187 is large ATPase domain (RuvB-L). ATP is bound by residues Arg-27, Gly-68, Lys-71, Thr-72, Thr-73, Glu-134–Tyr-136, Arg-177, Tyr-187, and Arg-224. Position 72 (Thr-72) interacts with Mg(2+). The small ATPAse domain (RuvB-S) stretch occupies residues Asn-188–Asp-258. Positions Ser-261–Lys-338 are head domain (RuvB-H). Positions 297, 316, and 321 each coordinate DNA.

The protein belongs to the RuvB family. Homohexamer. Forms an RuvA(8)-RuvB(12)-Holliday junction (HJ) complex. HJ DNA is sandwiched between 2 RuvA tetramers; dsDNA enters through RuvA and exits via RuvB. An RuvB hexamer assembles on each DNA strand where it exits the tetramer. Each RuvB hexamer is contacted by two RuvA subunits (via domain III) on 2 adjacent RuvB subunits; this complex drives branch migration. In the full resolvosome a probable DNA-RuvA(4)-RuvB(12)-RuvC(2) complex forms which resolves the HJ.

It is found in the cytoplasm. The enzyme catalyses ATP + H2O = ADP + phosphate + H(+). The RuvA-RuvB-RuvC complex processes Holliday junction (HJ) DNA during genetic recombination and DNA repair, while the RuvA-RuvB complex plays an important role in the rescue of blocked DNA replication forks via replication fork reversal (RFR). RuvA specifically binds to HJ cruciform DNA, conferring on it an open structure. The RuvB hexamer acts as an ATP-dependent pump, pulling dsDNA into and through the RuvAB complex. RuvB forms 2 homohexamers on either side of HJ DNA bound by 1 or 2 RuvA tetramers; 4 subunits per hexamer contact DNA at a time. Coordinated motions by a converter formed by DNA-disengaged RuvB subunits stimulates ATP hydrolysis and nucleotide exchange. Immobilization of the converter enables RuvB to convert the ATP-contained energy into a lever motion, pulling 2 nucleotides of DNA out of the RuvA tetramer per ATP hydrolyzed, thus driving DNA branch migration. The RuvB motors rotate together with the DNA substrate, which together with the progressing nucleotide cycle form the mechanistic basis for DNA recombination by continuous HJ branch migration. Branch migration allows RuvC to scan DNA until it finds its consensus sequence, where it cleaves and resolves cruciform DNA. In Shewanella sediminis (strain HAW-EB3), this protein is Holliday junction branch migration complex subunit RuvB.